The primary structure comprises 343 residues: Pyridoxal 5'-phosphate synthase subunit PDX1 (343 aa).

Position 73 (aspartate 73) interacts with D-ribose 5-phosphate. Residue lysine 130 is the Schiff-base intermediate with D-ribose 5-phosphate of the active site. Glycine 202 is a binding site for D-ribose 5-phosphate. D-glyceraldehyde 3-phosphate is bound at residue glutamine 214. D-ribose 5-phosphate is bound by residues glycine 263 and 284–285; that span reads GS.

It belongs to the PdxS/SNZ family.

It catalyses the reaction aldehydo-D-ribose 5-phosphate + D-glyceraldehyde 3-phosphate + L-glutamine = pyridoxal 5'-phosphate + L-glutamate + phosphate + 3 H2O + H(+). The protein operates within cofactor biosynthesis; pyridoxal 5'-phosphate biosynthesis. Functionally, catalyzes the formation of pyridoxal 5'-phosphate from ribose 5-phosphate (RBP), glyceraldehyde 3-phosphate (G3P) and ammonia. The ammonia is provided by PDX2. Can also use ribulose 5-phosphate and dihydroxyacetone phosphate as substrates, resulting from enzyme-catalyzed isomerization of RBP and G3P, respectively. Also plays an indirect role in resistance to singlet oxygen-generating photosensitizers. The sequence is that of Pyridoxal 5'-phosphate synthase subunit PDX1 (PDX1) from Cercospora nicotianae (Barn spot disease fungus).